Here is a 311-residue protein sequence, read N- to C-terminus: Methionyl-tRNA formyltransferase (311 aa).

Residue 110–113 coordinates (6S)-5,6,7,8-tetrahydrofolate; the sequence is SLLP.

It belongs to the Fmt family.

The catalysed reaction is L-methionyl-tRNA(fMet) + (6R)-10-formyltetrahydrofolate = N-formyl-L-methionyl-tRNA(fMet) + (6S)-5,6,7,8-tetrahydrofolate + H(+). Functionally, attaches a formyl group to the free amino group of methionyl-tRNA(fMet). The formyl group appears to play a dual role in the initiator identity of N-formylmethionyl-tRNA by promoting its recognition by IF2 and preventing the misappropriation of this tRNA by the elongation apparatus. In Streptococcus pyogenes serotype M49 (strain NZ131), this protein is Methionyl-tRNA formyltransferase.